The primary structure comprises 299 residues: Taste receptor type 2 member 5 (299 aa).

A topological domain (extracellular) is located at residue Met-1. The chain crosses the membrane as a helical span at residues 2 to 22; that stretch reads LSAGLGLLMLVAVVEFLIGLI. The Cytoplasmic portion of the chain corresponds to 23 to 45; that stretch reads GNGVLVVWSFREWIRKFSWSSYN. The helical transmembrane segment at 46-66 threads the bilayer; it reads LIILGLAGCRFVLQWLIILDL. Residues 67–82 are Extracellular-facing; the sequence is SLFPLFQSSRWLRYLS. The helical transmembrane segment at 83–103 threads the bilayer; it reads IFWVLVSQASLWFATFLSVFY. Topologically, residues 104 to 127 are cytoplasmic; that stretch reads CKKITTFDHPAYLWLKQRAYNLSL. A helical membrane pass occupies residues 128 to 148; that stretch reads WCLLGYFIINLLLTVQIGLMF. The Extracellular portion of the chain corresponds to 149–175; that stretch reads YHPPQGNSSIRYPFESWQYLYAFRLNS. The N-linked (GlcNAc...) asparagine glycan is linked to Asn-155. Residues 176–196 form a helical membrane-spanning segment; sequence GSYLPLMVFLVSSGMLIVSLY. At 197-223 the chain is on the cytoplasmic side; sequence THHKKMKVHSAGRRDVRAKAHITALKS. A helical transmembrane segment spans residues 224-244; it reads LGCFLLLHLVYIMASPFSIAS. Residues 245 to 253 lie on the Extracellular side of the membrane; sequence KTYPPDLTS. A helical membrane pass occupies residues 254-274; that stretch reads VFIWETLMAAYPSLHSLILIM. Topologically, residues 275-299 are cytoplasmic; that stretch reads GIPRVKQTCQKILWKTVCARRCWGP.

The protein belongs to the G-protein coupled receptor T2R family.

It is found in the membrane. Functionally, receptor that may play a role in the perception of bitterness and is gustducin-linked. May play a role in sensing the chemical composition of the gastrointestinal content. The activity of this receptor may stimulate alpha gustducin, mediate PLC-beta-2 activation and lead to the gating of TRPM5. This is Taste receptor type 2 member 5 (TAS2R5) from Pan paniscus (Pygmy chimpanzee).